The sequence spans 316 residues: MQILLANPRGFCAGVDRAISIVENALAIYGAPIYVRHEVVHNRYVVDSLRERGAIFIEQISEVPDGAILIFSAHGVSQAVRNEAKSRDLTVFDATCPLVTKVHMEVARASRRGEESILIGHAGHPEVEGTMGQYSNPEGGMYLVESPDDVWKLTVKNEEKLSFMTQTTLSVDDTSDVIDALRKRFPKIVGPRKDDICYATTNRQEAVRALAEQAEVVLVVGSKNSSNSNRLAELAQRMGKRAFLIDDAKDIQEEWVKEVKCVGVTAGASAPDILVQNVVARLQQLGGGEAIPLEGREENIVFEVPKELRVDIREVD.

Cys12 serves as a coordination point for [4Fe-4S] cluster. (2E)-4-hydroxy-3-methylbut-2-enyl diphosphate contacts are provided by His41 and His74. 2 residues coordinate dimethylallyl diphosphate: His41 and His74. Isopentenyl diphosphate is bound by residues His41 and His74. Cys96 is a [4Fe-4S] cluster binding site. Residue His124 coordinates (2E)-4-hydroxy-3-methylbut-2-enyl diphosphate. His124 provides a ligand contact to dimethylallyl diphosphate. Position 124 (His124) interacts with isopentenyl diphosphate. Catalysis depends on Glu126, which acts as the Proton donor. A (2E)-4-hydroxy-3-methylbut-2-enyl diphosphate-binding site is contributed by Thr167. Cys197 provides a ligand contact to [4Fe-4S] cluster. The (2E)-4-hydroxy-3-methylbut-2-enyl diphosphate site is built by Ser225, Ser226, Asn227, and Ser269. Residues Ser225, Ser226, Asn227, and Ser269 each contribute to the dimethylallyl diphosphate site. Ser225, Ser226, Asn227, and Ser269 together coordinate isopentenyl diphosphate.

This sequence belongs to the IspH family. As to quaternary structure, homodimer. It depends on [4Fe-4S] cluster as a cofactor.

The catalysed reaction is isopentenyl diphosphate + 2 oxidized [2Fe-2S]-[ferredoxin] + H2O = (2E)-4-hydroxy-3-methylbut-2-enyl diphosphate + 2 reduced [2Fe-2S]-[ferredoxin] + 2 H(+). The enzyme catalyses dimethylallyl diphosphate + 2 oxidized [2Fe-2S]-[ferredoxin] + H2O = (2E)-4-hydroxy-3-methylbut-2-enyl diphosphate + 2 reduced [2Fe-2S]-[ferredoxin] + 2 H(+). It functions in the pathway isoprenoid biosynthesis; dimethylallyl diphosphate biosynthesis; dimethylallyl diphosphate from (2E)-4-hydroxy-3-methylbutenyl diphosphate: step 1/1. Its pathway is isoprenoid biosynthesis; isopentenyl diphosphate biosynthesis via DXP pathway; isopentenyl diphosphate from 1-deoxy-D-xylulose 5-phosphate: step 6/6. Catalyzes the conversion of 1-hydroxy-2-methyl-2-(E)-butenyl 4-diphosphate (HMBPP) into a mixture of isopentenyl diphosphate (IPP) and dimethylallyl diphosphate (DMAPP). Acts in the terminal step of the DOXP/MEP pathway for isoprenoid precursor biosynthesis. In Escherichia coli O6:H1 (strain CFT073 / ATCC 700928 / UPEC), this protein is 4-hydroxy-3-methylbut-2-enyl diphosphate reductase.